The chain runs to 122 residues: Ribosome-binding factor A (122 aa).

This sequence belongs to the RbfA family. As to quaternary structure, monomer. Binds 30S ribosomal subunits, but not 50S ribosomal subunits or 70S ribosomes.

The protein resides in the cytoplasm. In terms of biological role, one of several proteins that assist in the late maturation steps of the functional core of the 30S ribosomal subunit. Associates with free 30S ribosomal subunits (but not with 30S subunits that are part of 70S ribosomes or polysomes). Required for efficient processing of 16S rRNA. May interact with the 5'-terminal helix region of 16S rRNA. The chain is Ribosome-binding factor A from Syntrophomonas wolfei subsp. wolfei (strain DSM 2245B / Goettingen).